Reading from the N-terminus, the 178-residue chain is Oligoribonuclease (178 aa).

The region spanning 7-168 (LIWIDLEMTG…DDIRESIAEL (162 aa)) is the Exonuclease domain. Residue Tyr128 is part of the active site.

It belongs to the oligoribonuclease family.

Its subcellular location is the cytoplasm. Its function is as follows. 3'-to-5' exoribonuclease specific for small oligoribonucleotides. The sequence is that of Oligoribonuclease from Pseudomonas syringae pv. tomato (strain ATCC BAA-871 / DC3000).